A 208-amino-acid polypeptide reads, in one-letter code: Mediator of RNA polymerase II transcription subunit 18 (208 aa).

The residue at position 66 (S66) is a Phosphoserine.

It belongs to the Mediator complex subunit 18 family. Component of the Mediator complex, which is composed of MED1, MED4, MED6, MED7, MED8, MED9, MED10, MED11, MED12, MED13, MED13L, MED14, MED15, MED16, MED17, MED18, MED19, MED20, MED21, MED22, MED23, MED24, MED25, MED26, MED27, MED29, MED30, MED31, CCNC, CDK8 and CDC2L6/CDK11. The MED12, MED13, CCNC and CDK8 subunits form a distinct module termed the CDK8 module. Mediator containing the CDK8 module is less active than Mediator lacking this module in supporting transcriptional activation. Individual preparations of the Mediator complex lacking one or more distinct subunits have been variously termed ARC, CRSP, DRIP, PC2, SMCC and TRAP.

The protein resides in the nucleus. Functionally, component of the Mediator complex, a coactivator involved in the regulated transcription of nearly all RNA polymerase II-dependent genes. Mediator functions as a bridge to convey information from gene-specific regulatory proteins to the basal RNA polymerase II transcription machinery. Mediator is recruited to promoters by direct interactions with regulatory proteins and serves as a scaffold for the assembly of a functional preinitiation complex with RNA polymerase II and the general transcription factors. In Bos taurus (Bovine), this protein is Mediator of RNA polymerase II transcription subunit 18 (MED18).